Consider the following 129-residue polypeptide: uncharacterized protein (129 aa).

The next 3 membrane-spanning stretches (helical) occupy residues 22-42 (LASSFSNASTLLSFVFFFFFF), 55-75 (VGSFSASASAETLLDFFFFFF), and 88-108 (LPFTAASKSSGITFLVFFFFF).

Its subcellular location is the membrane. This is an uncharacterized protein from Saccharomyces cerevisiae (strain ATCC 204508 / S288c) (Baker's yeast).